The following is a 79-amino-acid chain: Probable 26S proteasome complex subunit sem1 (79 aa).

Basic and acidic residues predominate over residues 1-21; the sequence is MSAPDKEKEKEKEETNNKSED. Positions 1-30 are disordered; it reads MSAPDKEKEKEKEETNNKSEDLGLLEEDDE. S19 is modified (phosphoserine).

This sequence belongs to the DSS1/SEM1 family. As to quaternary structure, part of the 26S proteasome.

Its function is as follows. Subunit of the 26S proteasome which plays a role in ubiquitin-dependent proteolysis. The protein is Probable 26S proteasome complex subunit sem1 of Drosophila melanogaster (Fruit fly).